A 440-amino-acid chain; its full sequence is Ribosomal protein uS12 methylthiotransferase RimO (440 aa).

Residues 5–116 enclose the MTTase N-terminal domain; the sequence is PTIAISHLGC…IVSVIERAEQ (112 aa). The [4Fe-4S] cluster site is built by Cys14, Cys50, Cys79, Cys154, Cys158, and Cys161. Residues 140–370 form the Radical SAM core domain; it reads TTTEGVAYLR…ALQQPISWRK (231 aa). The TRAM domain occupies 372–438; the sequence is QQEVGKTVEV…EYDLFGQVVS (67 aa).

This sequence belongs to the methylthiotransferase family. RimO subfamily. It depends on [4Fe-4S] cluster as a cofactor.

The protein resides in the cytoplasm. It carries out the reaction L-aspartate(89)-[ribosomal protein uS12]-hydrogen + (sulfur carrier)-SH + AH2 + 2 S-adenosyl-L-methionine = 3-methylsulfanyl-L-aspartate(89)-[ribosomal protein uS12]-hydrogen + (sulfur carrier)-H + 5'-deoxyadenosine + L-methionine + A + S-adenosyl-L-homocysteine + 2 H(+). In terms of biological role, catalyzes the methylthiolation of an aspartic acid residue of ribosomal protein uS12. The chain is Ribosomal protein uS12 methylthiotransferase RimO from Nostoc sp. (strain PCC 7120 / SAG 25.82 / UTEX 2576).